A 150-amino-acid polypeptide reads, in one-letter code: Regulatory protein RecX (150 aa).

This sequence belongs to the RecX family.

Its subcellular location is the cytoplasm. In terms of biological role, modulates RecA activity. In Legionella pneumophila (strain Corby), this protein is Regulatory protein RecX.